The primary structure comprises 257 residues: Phosphate import ATP-binding protein PstB (257 aa).

The 242-residue stretch at 11-252 (IQVRNLNFYY…PAKKQTEDYI (242 aa)) folds into the ABC transporter domain. 43-50 (GPSGCGKS) is a binding site for ATP.

It belongs to the ABC transporter superfamily. Phosphate importer (TC 3.A.1.7) family. In terms of assembly, the complex is composed of two ATP-binding proteins (PstB), two transmembrane proteins (PstC and PstA) and a solute-binding protein (PstS).

It localises to the cell inner membrane. The catalysed reaction is phosphate(out) + ATP + H2O = ADP + 2 phosphate(in) + H(+). Its function is as follows. Part of the ABC transporter complex PstSACB involved in phosphate import. Responsible for energy coupling to the transport system. The polypeptide is Phosphate import ATP-binding protein PstB (Escherichia coli O6:K15:H31 (strain 536 / UPEC)).